The primary structure comprises 262 residues: Type III pantothenate kinase (262 aa).

An ATP-binding site is contributed by 6-13 (DVGNTNAV). Residues Tyr-100 and 107–110 (GADR) each bind substrate. Residue Asp-109 is the Proton acceptor of the active site. Asp-129 is a K(+) binding site. Thr-132 serves as a coordination point for ATP. Thr-184 is a binding site for substrate.

The protein belongs to the type III pantothenate kinase family. As to quaternary structure, homodimer. It depends on NH4(+) as a cofactor. The cofactor is K(+).

It is found in the cytoplasm. The catalysed reaction is (R)-pantothenate + ATP = (R)-4'-phosphopantothenate + ADP + H(+). It functions in the pathway cofactor biosynthesis; coenzyme A biosynthesis; CoA from (R)-pantothenate: step 1/5. In terms of biological role, catalyzes the phosphorylation of pantothenate (Pan), the first step in CoA biosynthesis. The polypeptide is Type III pantothenate kinase (Bacillus cereus (strain B4264)).